The chain runs to 937 residues: FNIP repeat-containing protein DDB_G0271996 (937 aa).

The segment covering 1–12 (MQQPISIQQPVV) has biased composition (polar residues). Positions 1–60 (MQQPISIQQPVVNNINNSPNNQANINNNTTNNTNNNNNNNNTTNNIANNNNSNNINNNNE) are disordered. A compositionally biased stretch (low complexity) spans 13–60 (NNINNSPNNQANINNNTTNNTNNNNNNNNTTNNIANNNNSNNINNNNE). 4 FNIP repeats span residues 307-350 (FNQP…LGQR), 354-394 (PIPI…TLDN), 396-439 (FNQP…FHQN), and 598-640 (YNHQ…RVKS). A coiled-coil region spans residues 677–769 (VEQQAQYAQQ…EEEDTNNHQH (93 aa)). Residues 719-729 (KQQQQQQQDNE) show a composition bias toward low complexity. 3 disordered regions span residues 719-767 (KQQQ…TNNH), 794-823 (SNNS…EEED), and 910-937 (QNQN…NVKK). Over residues 751-763 (LEEEQENEEEEED) the composition is skewed to acidic residues. 2 stretches are compositionally biased toward low complexity: residues 794 to 814 (SNNS…NNNS) and 910 to 929 (QNQN…NNNN). Positions 902-937 (ICNNINQNQNQNNNNYNNNNNNNNNNNNNKKKNVKK) form a coiled coil.

This chain is FNIP repeat-containing protein DDB_G0271996, found in Dictyostelium discoideum (Social amoeba).